The following is a 156-amino-acid chain: PopC secretion inhibitor (156 aa).

The disordered stretch occupies residues Met-1–Gln-89. The span at Trp-8–Asp-28 shows a compositional bias: basic and acidic residues.

As to quaternary structure, interacts with PopC in non-starving cells.

It localises to the cytoplasm. In response to starvation, RelA is activated resulting in the accumulation of (p)ppGpp, which causes the degradation of PopD in an FtsH(D)-dependent manner, thereby releasing pre-formed PopC for secretion. Its function is as follows. Inhibitor of protease PopC. In non-starving cells, forms a cytoplasmic complex with PopC and inhibits PopC secretion and activity. The protein is PopC secretion inhibitor of Myxococcus xanthus (strain DK1622).